We begin with the raw amino-acid sequence, 616 residues long: Elongation factor 4 (616 aa).

The tr-type G domain maps to 14-195 (SRIRNFCIIA…EVIRQVPPPV (182 aa)). GTP-binding positions include 26-31 (DHGKST) and 142-145 (NKID).

Belongs to the TRAFAC class translation factor GTPase superfamily. Classic translation factor GTPase family. LepA subfamily.

The protein resides in the cell membrane. The catalysed reaction is GTP + H2O = GDP + phosphate + H(+). Functionally, required for accurate and efficient protein synthesis under certain stress conditions. May act as a fidelity factor of the translation reaction, by catalyzing a one-codon backward translocation of tRNAs on improperly translocated ribosomes. Back-translocation proceeds from a post-translocation (POST) complex to a pre-translocation (PRE) complex, thus giving elongation factor G a second chance to translocate the tRNAs correctly. Binds to ribosomes in a GTP-dependent manner. This is Elongation factor 4 from Nocardia farcinica (strain IFM 10152).